We begin with the raw amino-acid sequence, 344 residues long: Protein RecA (344 aa).

65-72 (GPESSGKT) contributes to the ATP binding site.

It belongs to the RecA family.

The protein localises to the cytoplasm. Its function is as follows. Can catalyze the hydrolysis of ATP in the presence of single-stranded DNA, the ATP-dependent uptake of single-stranded DNA by duplex DNA, and the ATP-dependent hybridization of homologous single-stranded DNAs. It interacts with LexA causing its activation and leading to its autocatalytic cleavage. The polypeptide is Protein RecA (Nitratiruptor sp. (strain SB155-2)).